The sequence spans 332 residues: Zinc finger protein CONSTANS-LIKE 13 (332 aa).

Zn(2+) contacts are provided by Cys-13, Cys-16, Cys-36, His-41, Cys-56, Cys-59, Cys-79, and His-84. The segment at 13–55 adopts a B box-type 1; atypical zinc-finger fold; that stretch reads CDYCDSSVALVYCKADSAKLCLACDKQVHVANQLFAKHFRSLL. Residues 56–96 form a B box-type 2; atypical zinc finger; the sequence is CDSCNESPSSLFCETERSVLCQNCDWQHHTASSSLHSRRPF. One can recognise a CCT domain in the interval 287-329; that stretch reads RNSALSRYKEKKKSRRYEKHIRYESRKVRAESRTRIRGRFAKA.

The protein belongs to the CONSTANS family.

Its subcellular location is the nucleus. The protein is Zinc finger protein CONSTANS-LIKE 13 (COL13) of Arabidopsis thaliana (Mouse-ear cress).